The primary structure comprises 316 residues: DNA-directed RNA polymerase III subunit RPC6 (316 aa).

Residue Ala-2 is modified to N-acetylalanine. Glycyl lysine isopeptide (Lys-Gly) (interchain with G-Cter in SUMO2) cross-links involve residues Lys-5 and Lys-7. [4Fe-4S] cluster contacts are provided by Cys-287, Cys-290, Cys-296, and Cys-307.

This sequence belongs to the eukaryotic RPC34/RPC39 RNA polymerase subunit family. In terms of assembly, component of the RNA polymerase III complex consisting of 17 subunits: a ten-subunit horseshoe-shaped catalytic core composed of POLR3A/RPC1, POLR3B/RPC2, POLR1C/RPAC1, POLR1D/RPAC2, POLR3K/RPC10, POLR2E/RPABC1, POLR2F/RPABC2, POLR2H/RPABC3, POLR2K/RPABC4 and POLR2L/RPABC5; a mobile stalk composed of two subunits POLR3H/RPC8 and CRCP/RPC9, protruding from the core and functioning primarily in transcription initiation; and additional subunits homologous to general transcription factors of the RNA polymerase II machinery, POLR3C/RPC3-POLR3F/RPC6-POLR3G/RPC7 heterotrimer required for transcription initiation and POLR3D/RPC4-POLR3E/RPC5 heterodimer involved in both transcription initiation and termination. Directly interacts with POLR3C. Interacts with TBP and TFIIIB90 and GTF3C4. Interacts with MAF1. As part of the RNA polymerase III complex, interacts with PKP2.

It is found in the nucleus. In terms of biological role, DNA-dependent RNA polymerase catalyzes the transcription of DNA into RNA using the four ribonucleoside triphosphates as substrates. Specific peripheric component of RNA polymerase III (Pol III) which synthesizes small non-coding RNAs including 5S rRNA, snRNAs, tRNAs and miRNAs from at least 500 distinct genomic loci. Part of POLR3C/RPC3-POLR3F/RPC6-POLR3G/RPC7 heterotrimer that coordinates the dynamics of Pol III stalk and clamp modules during the transition from apo to elongation state. Pol III plays a key role in sensing and limiting infection by intracellular bacteria and DNA viruses, including varicella zoster virus. Acts as a nuclear and cytosolic DNA sensor detecting AT-rich DNA, involved in innate immune response. Can sense non-self dsDNA that serves as template for transcription into dsRNA. The non-self RNA polymerase III transcripts, such as Epstein-Barr virus-encoded RNAs (EBERs) induce type I interferon and NF-kappa-B through the RIG-I pathway. Preferentially binds double-stranded DNA (dsDNA). In Homo sapiens (Human), this protein is DNA-directed RNA polymerase III subunit RPC6.